The chain runs to 313 residues: Intelectin-1b (313 aa).

Residues 1 to 19 (MTQLGFLLFIMIATRVCSA) form the signal peptide. Positions 32–251 (SFFSSLPRSC…NNERAASALC (220 aa)) constitute a Fibrinogen C-terminal domain. A disulfide bridge connects residues Cys41 and Cys70. Residues His86, Glu87, Asn89, Gly92, Gly97, Asp98, and Asp133 each coordinate Ca(2+). Disulfide bonds link Cys94-Cys280, Cys199-Cys259, and Cys251-Cys265. A glycan (N-linked (GlcNAc...) asparagine) is linked at Asn163. 4 residues coordinate Ca(2+): Asn260, Glu262, Glu274, and Asp282. A carbohydrate contacts are provided by residues 262-263 (EH) and Glu274. Ser298 is lipidated: GPI-anchor amidated serine. A propeptide spanning residues 299-313 (NSREITEAAVLLFYR) is cleaved from the precursor.

Expressed in the globlet and Paneth cells of the small intestine of infected mice. Expressed in the ileum of uninfected mice.

The protein localises to the cell membrane. It is found in the secreted. In terms of biological role, may play a protective role in the innate immune response to parasite infection. The protein is Intelectin-1b (Itln1b) of Mus musculus (Mouse).